The following is a 128-amino-acid chain: Aspartate 1-decarboxylase (128 aa).

Residue Ser25 is the Schiff-base intermediate with substrate; via pyruvic acid of the active site. Position 25 is a pyruvic acid (Ser) (Ser25). Residue Thr57 coordinates substrate. The active-site Proton donor is Tyr58. Gly73 to Ala75 serves as a coordination point for substrate.

Belongs to the PanD family. As to quaternary structure, heterooctamer of four alpha and four beta subunits. Requires pyruvate as cofactor. In terms of processing, is synthesized initially as an inactive proenzyme, which is activated by self-cleavage at a specific serine bond to produce a beta-subunit with a hydroxyl group at its C-terminus and an alpha-subunit with a pyruvoyl group at its N-terminus.

It is found in the cytoplasm. The catalysed reaction is L-aspartate + H(+) = beta-alanine + CO2. It functions in the pathway cofactor biosynthesis; (R)-pantothenate biosynthesis; beta-alanine from L-aspartate: step 1/1. Its function is as follows. Catalyzes the pyruvoyl-dependent decarboxylation of aspartate to produce beta-alanine. This Burkholderia lata (strain ATCC 17760 / DSM 23089 / LMG 22485 / NCIMB 9086 / R18194 / 383) protein is Aspartate 1-decarboxylase.